A 250-amino-acid chain; its full sequence is 1-(5-phosphoribosyl)-5-[(5-phosphoribosylamino)methylideneamino] imidazole-4-carboxamide isomerase (250 aa).

The active-site Proton acceptor is the Asp-10. The active-site Proton donor is the Asp-131.

This sequence belongs to the HisA/HisF family.

It localises to the cytoplasm. The catalysed reaction is 1-(5-phospho-beta-D-ribosyl)-5-[(5-phospho-beta-D-ribosylamino)methylideneamino]imidazole-4-carboxamide = 5-[(5-phospho-1-deoxy-D-ribulos-1-ylimino)methylamino]-1-(5-phospho-beta-D-ribosyl)imidazole-4-carboxamide. It functions in the pathway amino-acid biosynthesis; L-histidine biosynthesis; L-histidine from 5-phospho-alpha-D-ribose 1-diphosphate: step 4/9. This Desulfitobacterium hafniense (strain DSM 10664 / DCB-2) protein is 1-(5-phosphoribosyl)-5-[(5-phosphoribosylamino)methylideneamino] imidazole-4-carboxamide isomerase.